Reading from the N-terminus, the 107-residue chain is UPF0145 protein TT_C0892 (107 aa).

The protein belongs to the UPF0145 family.

The polypeptide is UPF0145 protein TT_C0892 (Thermus thermophilus (strain ATCC BAA-163 / DSM 7039 / HB27)).